The primary structure comprises 859 residues: MDSIVTEVTYGLEIKKIKDITELPFPVRQDSPLTEVLPTDLKTKDNFVARDPDLLRLTGSHPFNSEPPLTKLYDSGFLTPVSLHFVRNHGPVPYVPDENILDWEVSIEGMVETPYKIKLSDIMEQFDIYSTPVTMVCAGNRRKEQNMVKKGAGFNWGAAGTSTSLWTGCMLGDVIGKARPSKRARFVWMEGADNPANGAYRTCIRLSWCMDPERCIMIAYQQNGEWLHPDHGKPLRVVIPGVIGGRSVKWLKKLVVSDRPSENWYHYFDNRVLPTMVTPEMAKSDDRWWKDERYAIYDLNLQTIICKPENQQVIKISEDEYEIAGFGYNGGGVRIGRIEVSLDKGKSWKLADIDYPEDRYREAGYFRLFGGLVNVCDRMSCLCWCFWKLKVPLSELARSKDILIRGMDERMMVQPRTMYWNVTSMLNNWWYRVAIIREGESLRFEHPVVANKPGGWMDRVKAEGGDILDNNWGEVDDTVKQAERRPHIDEDLEMMCNREKMDVVIKYSEFEAHKDSETEPWFAVKGQVFDGSSYLEDHPGGAQSILMVSGEDATDDFIAIHSSFAKKLLPSMHLGRLEEVSSVTKVKSVEQNVKREVLLDPRKWHKITLAEKEVISSDSRIFKFDLEHSEQLSGLPTGKHLFLRLKDSSGKYVMRAYTPKSSNSLRGRLEILIKVYFPNREYPNGGIMTNLIENLQVGNQIEVKGPVGEFEYVKCGHCSFNNKPYQMKHFVMISGGSGITPTYQVLQAIFSDPEDRTSVQLFFGNKKVDDILLREELDHIQEKYPEQFKVDYSLSDLDHLPENWSGVRGRLTFDILDTYVRGKKMGEYMLLVCGPPGMNGVVENWCNARKLDKQYVVYF.

Residue C137 participates in Mo-molybdopterin binding. The 77-residue stretch at 502–578 folds into the Cytochrome b5 heme-binding domain; the sequence is DVVIKYSEFE…LPSMHLGRLE (77 aa). The heme site is built by H538 and H561. The FAD-binding FR-type domain occupies 602–713; the sequence is RKWHKITLAE…KGPVGEFEYV (112 aa). FAD-binding positions include 655–658, 672–676, F677, 687–689, S737, and T740; these read RAYT, LIKVY, and IMT. Residue 829–838 participates in NADP(+) binding; the sequence is MLLVCGPPGM.

The protein belongs to the nitrate reductase family. In terms of assembly, homodimer. FAD is required as a cofactor. The cofactor is heme. Requires Mo-molybdopterin as cofactor.

It carries out the reaction nitrite + NADP(+) + H2O = nitrate + NADPH + H(+). Functionally, nitrate reductase is a key enzyme involved in the first step of nitrate assimilation in plants, fungi and bacteria. This is Nitrate reductase [NADPH] (YNR1) from Pichia angusta (Yeast).